The sequence spans 167 residues: Large ribosomal subunit protein uL23 (167 aa).

The large ribosomal subunit protein uL23 stretch occupies residues 1-130 (MNVNEIIKGP…ELEAKNKEIA (130 aa)). 2 disordered regions span residues 91 to 112 (FEDE…TDEK) and 137 to 167 (QAEL…NSAK). Basic and acidic residues-rich tracts occupy residues 97 to 112 (QDQK…TDEK) and 137 to 157 (QAEL…KIEN). Residues 131-167 (EKLAKKQAELAKKESETNENQEKKIENQTENQENSAK) are unknown. Over residues 158–167 (QTENQENSAK) the composition is skewed to polar residues.

This sequence belongs to the universal ribosomal protein uL23 family. In terms of assembly, part of the 50S ribosomal subunit. Contacts protein L29, and trigger factor when it is bound to the ribosome.

Functionally, one of the early assembly proteins it binds 23S rRNA. One of the proteins that surrounds the polypeptide exit tunnel on the outside of the ribosome. Forms the main docking site for trigger factor binding to the ribosome. This chain is Large ribosomal subunit protein uL23, found in Mesomycoplasma hyopneumoniae (strain 7448) (Mycoplasma hyopneumoniae).